A 237-amino-acid polypeptide reads, in one-letter code: Lectin alpha chain (237 aa).

Residues E8 and D10 each contribute to the Mn(2+) site. The Ca(2+) site is built by D10, Y12, N14, and D19. Residue Y12 participates in a carbohydrate binding. D19 and H24 together coordinate Mn(2+). 99 to 100 is a binding site for a carbohydrate; sequence LY. D208 is a binding site for Ca(2+). R228 serves as a coordination point for a carbohydrate.

This sequence belongs to the leguminous lectin family. As to quaternary structure, homotetramer. In terms of processing, the beta and gamma chains are produced by partial proteolytic processing of the lectin alpha chain by an asparaginyl endopeptidase.

It is found in the vacuole. Its subcellular location is the aleurone grain. Functionally, D-mannose/D-glucose-binding lectin with hemagglutinating activity towards rabbit and human erythrocytes. In rats, elicits an acute inflammatory response by inducing neutrophil migration and induces dose-dependent paw edema. In Macropsychanthus wilsonii (Wilson's clusterpea), this protein is Lectin alpha chain.